Consider the following 306-residue polypeptide: MPRDRLKELQEKATVNTIHAYNYDPPARKYDVESQPLINQDADFEMFLERCSNIRGGLKSLEEDYDAVVQLHGALLSTPGADSENSNKLKSHNQMFFSKAEQIKNSLKILSEETSRIPTTACGIMRAKSDQVKSIYKTFENIMLNFNREQDEYKEKAKRKIVDYLKIRNMQLSDEEIENAVSSGNLSEVTKGVMLALNEKKALYDEVKSRADELKNLERQMGELAQMFHDLHIMVVSQAKMVDSIVNSVENATEYAKQARGNVEEARNLQKRARKMKVCIIIGSIIAVLILILFIQSAVCHFTPIC.

At M1–C279 the chain is on the cytoplasmic side. The segment at Q40–A180 is required for the regulation of the defecation motor program. In terms of domain architecture, t-SNARE coiled-coil homology spans Y204–A266. The helical; Anchor for type IV membrane protein transmembrane segment at I280 to C300 threads the bilayer. Residues H301–C306 lie on the Extracellular side of the membrane.

Belongs to the syntaxin family. In terms of tissue distribution, expressed in body wall, pharyngeal, vulval and enteric muscles and in some head neurons.

The protein resides in the cell membrane. Its function is as follows. Potentially involved in docking of synaptic vesicles at presynaptic active zones. Acts in the intestine to regulate anterior body muscle contractions (aBOC) and the expulsion steps during the defecation motor program (DMP). The sequence is that of Putative syntaxin-3 from Caenorhabditis elegans.